Reading from the N-terminus, the 148-residue chain is Leghemoglobin 3 (148 aa).

Positions 2–148 (GFTEKQEALV…LSAAIKKAMS (147 aa)) constitute a Globin domain. The residue at position 30 (Tyr-30) is a Nitrated tyrosine. Residue Ser-45 participates in heme b binding. Ser-45 is modified (phosphoserine). His-63 is a binding site for O2. Heme b contacts are provided by Lys-66, His-95, and Lys-98. Tyr-136 is modified (nitrated tyrosine).

The protein belongs to the plant globin family. In terms of assembly, monomer. Post-translationally, nitrated in effective nodules and particularly in hypoxic conditions; this mechanism may play a protective role in the symbiosis by buffering toxic peroxynitrite NO(2)(-). Nitration level decrease during nodule senescence. In terms of processing, phosphorylation at Ser-45 disrupts the molecular environment of its porphyrin ring oxygen binding pocket, thus leading to a reduced oxygen consumption and to the delivery of oxygen O(2) to symbiosomes. Stem nodules.

Its subcellular location is the cytoplasm. The protein resides in the cytosol. It is found in the nucleus. Leghemoglobin that reversibly binds oxygen O(2) through a pentacoordinated heme iron. In stem nodules, facilitates the diffusion of oxygen to the bacteroids while preventing the bacterial nitrogenase from being inactivated by buffering dioxygen, nitric oxide and carbon monoxide, and promoting the formation of reactive oxygen species (ROS, e.g. H(2)O(2)). This role is essential for symbiotic nitrogen fixation (SNF). The polypeptide is Leghemoglobin 3 (Sesbania rostrata).